We begin with the raw amino-acid sequence, 502 residues long: ATP synthase subunit alpha, chloroplastic (502 aa).

An ATP-binding site is contributed by 170–177 (GDRQTGKT).

Belongs to the ATPase alpha/beta chains family. F-type ATPases have 2 components, CF(1) - the catalytic core - and CF(0) - the membrane proton channel. CF(1) has five subunits: alpha(3), beta(3), gamma(1), delta(1), epsilon(1). CF(0) has four main subunits: a, b, b' and c.

It is found in the plastid. The protein resides in the chloroplast thylakoid membrane. It catalyses the reaction ATP + H2O + 4 H(+)(in) = ADP + phosphate + 5 H(+)(out). Its function is as follows. Produces ATP from ADP in the presence of a proton gradient across the membrane. The alpha chain is a regulatory subunit. The sequence is that of ATP synthase subunit alpha, chloroplastic from Tupiella akineta (Green alga).